A 99-amino-acid polypeptide reads, in one-letter code: NADH-quinone oxidoreductase subunit K (99 aa).

The next 3 membrane-spanning stretches (helical) occupy residues 3–23 (ILFS…GILI), 28–48 (LIVF…FVAF), and 59–79 (IWVF…LAII).

Belongs to the complex I subunit 4L family. As to quaternary structure, NDH-1 is composed of 14 different subunits. Subunits NuoA, H, J, K, L, M, N constitute the membrane sector of the complex.

The protein localises to the cell inner membrane. It carries out the reaction a quinone + NADH + 5 H(+)(in) = a quinol + NAD(+) + 4 H(+)(out). NDH-1 shuttles electrons from NADH, via FMN and iron-sulfur (Fe-S) centers, to quinones in the respiratory chain. The immediate electron acceptor for the enzyme in this species is believed to be ubiquinone. Couples the redox reaction to proton translocation (for every two electrons transferred, four hydrogen ions are translocated across the cytoplasmic membrane), and thus conserves the redox energy in a proton gradient. This chain is NADH-quinone oxidoreductase subunit K, found in Protochlamydia amoebophila (strain UWE25).